Here is a 418-residue protein sequence, read N- to C-terminus: AP-3 complex subunit mu-1 (418 aa).

Residues 176–417 enclose the MHD domain; it reads NNEAYFDVVE…VTKAGKFQVR (242 aa).

This sequence belongs to the adaptor complexes medium subunit family. In terms of assembly, adaptor protein complex 3 (AP-3) is a heterotetramer composed of two large adaptins (delta-type subunit AP3D1 and beta-type subunit AP3B1 or AP3B2), a medium adaptin (mu-type subunit AP3M1 or AP3M2) and a small adaptin (sigma-type subunit APS1 or AP3S2). Interacts with AGAP1. AP-3 associates with the BLOC-1 complex.

The protein resides in the golgi apparatus. Its subcellular location is the cytoplasmic vesicle membrane. Its function is as follows. Part of the AP-3 complex, an adaptor-related complex which is not clathrin-associated. The complex is associated with the Golgi region as well as more peripheral structures. It facilitates the budding of vesicles from the Golgi membrane and may be directly involved in trafficking to lysosomes. In concert with the BLOC-1 complex, AP-3 is required to target cargos into vesicles assembled at cell bodies for delivery into neurites and nerve terminals. In Mus musculus (Mouse), this protein is AP-3 complex subunit mu-1 (Ap3m1).